The primary structure comprises 351 residues: Holliday junction branch migration complex subunit RuvB (351 aa).

The tract at residues 4 to 199 (DNPQFNQWYE…FGIINSLQYY (196 aa)) is large ATPase domain (RuvB-L). Residues Leu-38, Arg-39, Gly-80, Lys-83, Thr-84, Thr-85, 146 to 148 (EDY), Arg-189, Tyr-199, and Arg-236 contribute to the ATP site. Mg(2+) is bound at residue Thr-84. Residues 200–270 (TPEELQQIVV…IVTIGLDKLR (71 aa)) are small ATPAse domain (RuvB-S). The tract at residues 273–351 (NRGLDETDHK…HLGHAYQRKL (79 aa)) is head domain (RuvB-H). Arg-328 and Arg-333 together coordinate DNA.

Belongs to the RuvB family. Homohexamer. Forms an RuvA(8)-RuvB(12)-Holliday junction (HJ) complex. HJ DNA is sandwiched between 2 RuvA tetramers; dsDNA enters through RuvA and exits via RuvB. An RuvB hexamer assembles on each DNA strand where it exits the tetramer. Each RuvB hexamer is contacted by two RuvA subunits (via domain III) on 2 adjacent RuvB subunits; this complex drives branch migration. In the full resolvosome a probable DNA-RuvA(4)-RuvB(12)-RuvC(2) complex forms which resolves the HJ.

The protein localises to the cytoplasm. It carries out the reaction ATP + H2O = ADP + phosphate + H(+). The RuvA-RuvB-RuvC complex processes Holliday junction (HJ) DNA during genetic recombination and DNA repair, while the RuvA-RuvB complex plays an important role in the rescue of blocked DNA replication forks via replication fork reversal (RFR). RuvA specifically binds to HJ cruciform DNA, conferring on it an open structure. The RuvB hexamer acts as an ATP-dependent pump, pulling dsDNA into and through the RuvAB complex. RuvB forms 2 homohexamers on either side of HJ DNA bound by 1 or 2 RuvA tetramers; 4 subunits per hexamer contact DNA at a time. Coordinated motions by a converter formed by DNA-disengaged RuvB subunits stimulates ATP hydrolysis and nucleotide exchange. Immobilization of the converter enables RuvB to convert the ATP-contained energy into a lever motion, pulling 2 nucleotides of DNA out of the RuvA tetramer per ATP hydrolyzed, thus driving DNA branch migration. The RuvB motors rotate together with the DNA substrate, which together with the progressing nucleotide cycle form the mechanistic basis for DNA recombination by continuous HJ branch migration. Branch migration allows RuvC to scan DNA until it finds its consensus sequence, where it cleaves and resolves cruciform DNA. In Leuconostoc mesenteroides subsp. mesenteroides (strain ATCC 8293 / DSM 20343 / BCRC 11652 / CCM 1803 / JCM 6124 / NCDO 523 / NBRC 100496 / NCIMB 8023 / NCTC 12954 / NRRL B-1118 / 37Y), this protein is Holliday junction branch migration complex subunit RuvB.